We begin with the raw amino-acid sequence, 465 residues long: MESLRIYNTLARDKQVFVPRQSGEVRMYVCGITVYDYCHVGHARMLVVFDLVQRWLRAIGYRVTYVRNITDIEDKIIRRAVENGETIKSLTDRFIGAMHEDEAALGIQRPDLEPRATQFIPQMLGMIEKLETNGYAYQAADGDVNYSVRKFANYGKLSGKSLDDLRAGERVAANDAKEDPLDFVLWKRAKADDPPGATWASKYGMGRPGWHIECSAMGCTLLGEHFDIHGGGQDLQFPHHENEIAQSEGATGQTFVNYWMHNGFVQVDNEKMSKSLGNFFTIREVLERYDAEVMRFFIVRTHYRSPLNYSDVHLDDARASLTRLYTALKDVEPDALALDWNEPHAQRFAAAMNDDINTPVAVATLFELAGEINRTRDASLARQLKQLAGLLGLLGREPRAFLQQATGAAQAGGLAADEIEAKIAARVAAKQAKDYAEADRIRAELLDAGIALEDKPGGSTEWRRV.

A Zn(2+)-binding site is contributed by Cys-30. The 'HIGH' region signature appears at 32–42 (ITVYDYCHVGH). 3 residues coordinate Zn(2+): Cys-214, His-239, and Glu-243. Residues 271 to 275 (KMSKS) carry the 'KMSKS' region motif. Lys-274 serves as a coordination point for ATP.

It belongs to the class-I aminoacyl-tRNA synthetase family. In terms of assembly, monomer. Requires Zn(2+) as cofactor.

The protein localises to the cytoplasm. It carries out the reaction tRNA(Cys) + L-cysteine + ATP = L-cysteinyl-tRNA(Cys) + AMP + diphosphate. This is Cysteine--tRNA ligase from Burkholderia ambifaria (strain ATCC BAA-244 / DSM 16087 / CCUG 44356 / LMG 19182 / AMMD) (Burkholderia cepacia (strain AMMD)).